A 548-amino-acid polypeptide reads, in one-letter code: ATP synthase subunit alpha (548 aa).

172 to 179 provides a ligand contact to ATP; sequence GDRKTGKT. The interval 511-548 is disordered; it reads FETTSGESVVPDENVEAMSEDDVEKESVKVRKPAPKKK. Acidic residues predominate over residues 523-534; sequence ENVEAMSEDDVE.

The protein belongs to the ATPase alpha/beta chains family. F-type ATPases have 2 components, CF(1) - the catalytic core - and CF(0) - the membrane proton channel. CF(1) has five subunits: alpha(3), beta(3), gamma(1), delta(1), epsilon(1). CF(0) has three main subunits: a(1), b(2) and c(9-12). The alpha and beta chains form an alternating ring which encloses part of the gamma chain. CF(1) is attached to CF(0) by a central stalk formed by the gamma and epsilon chains, while a peripheral stalk is formed by the delta and b chains.

It is found in the cell membrane. The enzyme catalyses ATP + H2O + 4 H(+)(in) = ADP + phosphate + 5 H(+)(out). Functionally, produces ATP from ADP in the presence of a proton gradient across the membrane. The alpha chain is a regulatory subunit. This is ATP synthase subunit alpha from Mycobacterium sp. (strain JLS).